Consider the following 432-residue polypeptide: Luc7-like protein 3 (432 aa).

The residue at position 1 (M1) is an N-acetylmethionine. A phosphoserine mark is found at S3, S110, and S115. Positions 124-181 form a coiled coil; sequence KNEEKIQVLTDKIDVLLQQIEELGSEGKVEEAQGMMKLVEQLKEERELLRSTTSTIES. K231 carries the N6-acetyllysine modification. Residues 234–287 are compositionally biased toward basic and acidic residues; sequence LRKRTEEPDRDERLKKEKQEREEREKEREREREERERKRRREEEEREKERARDR. Residues 234–432 are disordered; it reads LRKRTEEPDR…IKSEGDTQSN (199 aa). Residues 288 to 301 are compositionally biased toward basic residues; it reads ERRKRSRSRSRHSS. A compositionally biased stretch (basic and acidic residues) spans 302 to 311; that stretch reads RTSDRRCSRS. Residues 312 to 367 are compositionally biased toward basic residues; the sequence is RDHKRSRSRERRRSRSRDRRRSRSHDRSERKHRSRSRDRRRSKSRDRKSYKHRSKS. Over residues 368–414 the composition is skewed to basic and acidic residues; the sequence is RDREQDRKSKEKEKRGSDDKKSSVKSGSREKQSEDTNTESKESDTKN. A Phosphoserine modification is found at S420. Over residues 421–432 the composition is skewed to basic and acidic residues; sequence EDIKSEGDTQSN. K424 participates in a covalent cross-link: Glycyl lysine isopeptide (Lys-Gly) (interchain with G-Cter in SUMO1); alternate. K424 participates in a covalent cross-link: Glycyl lysine isopeptide (Lys-Gly) (interchain with G-Cter in SUMO2); alternate. Phosphoserine occurs at positions 425 and 431.

Belongs to the Luc7 family. As to quaternary structure, may interact with SFRS1 and form homodimers. Interacts with JMJD6. Interacts with RBM25. Interacts with RSRC1 (via Arg/Ser-rich domain). Interacts with RRP1B. In terms of processing, phosphorylated in vitro by SRPK1, SRPK2 and CLK1. Widely expressed. Highest levels in heart, brain, pancreas, thymus, ovary, small intestine and peripheral blood leukocytes, as well as cerebellum, putamen and pituitary gland. Lowest levels in lung, liver and kidney. Also expressed in fetal tissues, including brain, heart, kidney, thymus and lung.

It is found in the nucleus speckle. In terms of biological role, binds cAMP regulatory element DNA sequence. May play a role in RNA splicing. In Homo sapiens (Human), this protein is Luc7-like protein 3 (LUC7L3).